Here is a 399-residue protein sequence, read N- to C-terminus: Developmentally-regulated G-protein 2 (399 aa).

The region spanning 63–288 (GRVALIGFPS…LLARMWDEMG (226 aa)) is the OBG-type G domain. Residues 69–76 (GFPSVGKS), 115–119 (DLPGI), and 246–249 (NKID) contribute to the GTP site. The region spanning 288–366 (GLVRVYSKPQ…EDEDVVQIVK (79 aa)) is the TGS domain. A disordered region spans residues 372–399 (EGGRGRFKSHSNAPARIADREKKAPLKQ). Positions 388-399 (IADREKKAPLKQ) are enriched in basic and acidic residues.

It belongs to the TRAFAC class OBG-HflX-like GTPase superfamily. OBG GTPase family.

It localises to the cytoplasm. Binds GDP and GTP, and has low GTPase activity. The polypeptide is Developmentally-regulated G-protein 2 (DRG2) (Arabidopsis thaliana (Mouse-ear cress)).